The primary structure comprises 262 residues: tRNA pseudouridine synthase A (262 aa).

Catalysis depends on D55, which acts as the Nucleophile. Y116 lines the substrate pocket.

The protein belongs to the tRNA pseudouridine synthase TruA family. As to quaternary structure, homodimer.

It carries out the reaction uridine(38/39/40) in tRNA = pseudouridine(38/39/40) in tRNA. Its function is as follows. Formation of pseudouridine at positions 38, 39 and 40 in the anticodon stem and loop of transfer RNAs. The chain is tRNA pseudouridine synthase A from Bdellovibrio bacteriovorus (strain ATCC 15356 / DSM 50701 / NCIMB 9529 / HD100).